The chain runs to 169 residues: MLRSEKPVAVEDIVNIYKESPSVIITHYHGLTVSQVSSLRDSLKSKEAGFKVVKNTLAKIAANQTGLDSIANLFAGPTAIVYSKEPVEMAKLVVNFAKANDNLKIIGGIVDNHVLDEHSIKELSKLPSLNELRGKIVGLLQAPATKVVGVLQAPSSSMARVIQAHASKN.

This sequence belongs to the universal ribosomal protein uL10 family. As to quaternary structure, part of the ribosomal stalk of the 50S ribosomal subunit. The N-terminus interacts with L11 and the large rRNA to form the base of the stalk. The C-terminus forms an elongated spine to which L12 dimers bind in a sequential fashion forming a multimeric L10(L12)X complex.

Forms part of the ribosomal stalk, playing a central role in the interaction of the ribosome with GTP-bound translation factors. This is Large ribosomal subunit protein uL10 from Rickettsia felis (strain ATCC VR-1525 / URRWXCal2) (Rickettsia azadi).